A 416-amino-acid chain; its full sequence is 3-isopropylmalate dehydratase large subunit (416 aa).

Residues cysteine 297, cysteine 357, and cysteine 360 each coordinate [4Fe-4S] cluster.

It belongs to the aconitase/IPM isomerase family. LeuC type 2 subfamily. In terms of assembly, heterodimer of LeuC and LeuD. The cofactor is [4Fe-4S] cluster.

The catalysed reaction is (2R,3S)-3-isopropylmalate = (2S)-2-isopropylmalate. Its pathway is amino-acid biosynthesis; L-leucine biosynthesis; L-leucine from 3-methyl-2-oxobutanoate: step 2/4. In terms of biological role, catalyzes the isomerization between 2-isopropylmalate and 3-isopropylmalate, via the formation of 2-isopropylmaleate. The protein is 3-isopropylmalate dehydratase large subunit of Methanoregula boonei (strain DSM 21154 / JCM 14090 / 6A8).